An 859-amino-acid polypeptide reads, in one-letter code: Protein EFR3 homolog (859 aa).

2 disordered regions span residues D638 to T657 and R697 to Y724. A compositionally biased stretch (basic and acidic residues) spans W704–D722.

Belongs to the EFR3 family.

The polypeptide is Protein EFR3 homolog (Caenorhabditis briggsae).